We begin with the raw amino-acid sequence, 166 residues long: Regulatory protein RecX (166 aa).

The protein belongs to the RecX family.

Its subcellular location is the cytoplasm. Functionally, modulates RecA activity. This is Regulatory protein RecX from Escherichia coli (strain K12 / MC4100 / BW2952).